A 345-amino-acid polypeptide reads, in one-letter code: Leucine-rich repeat and transmembrane domain-containing protein 1 (345 aa).

Residues 1–27 (MKGELLLFSSVIVLLQVVCSCPDKCYC) form the signal peptide. The 23-residue stretch at 28-50 (QSSTNFVDCSQQGLAEIPSHLPP) folds into the LRRNT domain. Residues 28–288 (QSSTNFVDCS…PANLRHAIAT (261 aa)) are Extracellular-facing. LRR repeat units follow at residues 51–72 (QTRTLHLQDNQIHHLPAFAFRS), 75–96 (WLMTLNLSNNSLSNLAPGAFHG), 99–120 (HLQVLNLTQNSLLSLESRLFHS), 123–144 (QLRELDLSSNNISHLPTSLGET), and 147–168 (NLTILAVQQNQLQQLDRALLES). N-linked (GlcNAc...) asparagine glycosylation is present at N104. The N-linked (GlcNAc...) asparagine glycan is linked to N147. Residues 180–234 (NLWKCNCHLLGLKLWLEKFVYKGGLTDGIICESPDTWKGKDLLRIPHELYQPCPL) form the LRRCT domain. The chain crosses the membrane as a helical span at residues 289–309 (VIITGVVCGIVCLMMLAAAIY). Topologically, residues 310 to 345 (GCTYAAITAQYHGGPLAQTNDPGKVEEKERFDSSPA) are cytoplasmic. The tract at residues 326–345 (AQTNDPGKVEEKERFDSSPA) is disordered. Residues 332–345 (GKVEEKERFDSSPA) show a composition bias toward basic and acidic residues.

The protein resides in the membrane. The chain is Leucine-rich repeat and transmembrane domain-containing protein 1 (LRTM1) from Homo sapiens (Human).